Reading from the N-terminus, the 796-residue chain is MTSTLQATDIATLSPNEQAAIDAWWRAANYLSVGQIYLRDNPLLQEPLRPEHIKQRLLGHWGSDPGLSFVYVHLNRLIRRLDLNLIYVTGPGHGAPALLANAWLEGTYSEVYPNCQQSTAGLQQFFKQFSFPGGIGSHCTPETPGSIHEGGELGYSLSHAFGAALDNPDLIVACVIGDGEAETGPLATSWHSNKFLNPAQDGAVLPILHLNGYKIANPTLLSRISHEELRSLFIGYGYEPFFVEGNDPAILHGVMASTLATCVQKIQAIQAAARSGESSDRPMWPMIVLRTPKGWTGPATIKGHVVEGSWRSHQVPMADVLTNPEHLQLLEDWLRSYRPEELFDASGAPVAELQAIAPIGDRRMSANPVTNGGLLRRALTLPDFRDQAVSVPAPGKSRADSTRPLGQFLREVIRHNPDNFRLFGPDETASNRLDAVYEVTSKVWLGDRIPEDEDGGHLSDRGRVMEILSEHTLEGWLEAYLLTGRHGFFATYEAFAHVIDSMVNQHAKWLDVSKREVDWRAPVSSLNILLSSTVWRQDHNGFSHQDPGFIDLVTNKSARVTRIYLPPDANCLLSVADHCLRSTDYINVIVADKQSHLQYLDAEAAARHCAKGIGIWDWASNDQGASPDVVIASCGDVVTLEALAATALLREHFPDLKIRFVNVVDLFRLQPDTEHPHGLSDRDFDSLFTVDKPIIFNFHGYPWLIHKLAYRRHNHNNLHVRGYKEVGNINTPLELAIRNQVDRFNLAIDVIDRVPHLRDRGAHVKEWLKDQIHDHIQYAYQEGIDRPEINQWQWPF.

It belongs to the XFP family. Thiamine diphosphate serves as cofactor.

This chain is Probable phosphoketolase, found in Synechococcus elongatus (strain ATCC 33912 / PCC 7942 / FACHB-805) (Anacystis nidulans R2).